The sequence spans 667 residues: Leucine aminopeptidase 2 (667 aa).

Residues 188–190 (QCQ) and 318–323 (PYGGME) contribute to the a peptide site. A Zn(2+)-binding site is contributed by histidine 347. Residue glutamate 348 is the Proton acceptor of the active site. 2 residues coordinate Zn(2+): histidine 351 and glutamate 370. The active-site Proton donor is tyrosine 436.

Belongs to the peptidase M1 family. Zn(2+) serves as cofactor.

It is found in the cytoplasm. The protein localises to the nucleus. The catalysed reaction is an epoxide + H2O = an ethanediol. Aminopeptidase that preferentially cleaves di- and tripeptides. Also has low epoxide hydrolase activity (in vitro). Can hydrolyze the epoxide leukotriene LTA(4) but it forms preferentially 5,6-dihydroxy-7,9,11,14-eicosatetraenoic acid rather than the cytokine leukotriene B(4) as the product compared to the homologous mammalian enzyme (in vitro). The sequence is that of Leucine aminopeptidase 2 (ara-1) from Neurospora crassa (strain ATCC 24698 / 74-OR23-1A / CBS 708.71 / DSM 1257 / FGSC 987).